The chain runs to 233 residues: Small ribosomal subunit protein uS3 (233 aa).

One can recognise a KH type-2 domain in the interval 39 to 107 (IRAFLKRKLY…DVNINIKEER (69 aa)). The span at 212 to 222 (MQPEKTEESAP) shows a compositional bias: basic and acidic residues. Residues 212 to 233 (MQPEKTEESAPAKKSRRTRRGK) form a disordered region. Positions 224-233 (KKSRRTRRGK) are enriched in basic residues.

The protein belongs to the universal ribosomal protein uS3 family. Part of the 30S ribosomal subunit. Forms a tight complex with proteins S10 and S14.

In terms of biological role, binds the lower part of the 30S subunit head. Binds mRNA in the 70S ribosome, positioning it for translation. This Campylobacter jejuni subsp. doylei (strain ATCC BAA-1458 / RM4099 / 269.97) protein is Small ribosomal subunit protein uS3.